Here is a 577-residue protein sequence, read N- to C-terminus: Arginine--tRNA ligase (577 aa).

The 'HIGH' region motif lies at 132–142; that stretch reads ANPTGPLHVGH.

This sequence belongs to the class-I aminoacyl-tRNA synthetase family. As to quaternary structure, monomer.

It localises to the cytoplasm. It catalyses the reaction tRNA(Arg) + L-arginine + ATP = L-arginyl-tRNA(Arg) + AMP + diphosphate. The sequence is that of Arginine--tRNA ligase from Janthinobacterium sp. (strain Marseille) (Minibacterium massiliensis).